Reading from the N-terminus, the 864-residue chain is NT-3 growth factor receptor (864 aa).

Positions 1–31 (MDVSLCPAKCSFWRIFLLGSVWLDYVGSVLA) are cleaved as a signal peptide. 2 disulfide bridges follow: Cys32-Cys38 and Cys36-Cys45. The Extracellular portion of the chain corresponds to 32–429 (CPANCVCSKT…TVTHKPEEDT (398 aa)). 3 N-linked (GlcNAc...) asparagine glycosylation sites follow: Asn68, Asn72, and Asn79. LRR repeat units follow at residues 104–125 (GLQK…AFAK) and 128–149 (HLRY…LFQT). N-linked (GlcNAc...) asparagine glycans are attached at residues Asn133 and Asn163. Positions 160 to 209 (NFFNCSCDIRWMQLWQEQGEARLDSQSLYCISADGSQLPLFRMNISQCDL) constitute an LRRCT domain. Disulfide bonds link Cys164/Cys189 and Cys166/Cys207. Residues Asn203, Asn218, Asn232, Asn259, Asn267, Asn272, and Asn294 are each glycosylated (N-linked (GlcNAc...) asparagine). 2 consecutive Ig-like C2-type domains span residues 210-300 (PEIS…VALT) and 309-382 (SLVE…IAKN). A disulfide bond links Cys231 and Cys284. Cys320 and Cys362 form a disulfide bridge. Asn375 and Asn388 each carry an N-linked (GlcNAc...) asparagine glycan. Residues 430–453 (FGVSIAVGLAAFACVLLVVLFIMI) form a helical membrane-spanning segment. At 454–864 (NKYGRRSKFG…ATPIYLDILG (411 aa)) the chain is on the cytoplasmic side. Residue Ser493 is modified to Phosphoserine. Phosphotyrosine; by autocatalysis is present on Tyr516. Residues 538-853 (IVLKRELGEG…EIYKILHALG (316 aa)) form the Protein kinase domain. ATP contacts are provided by residues 544-552 (LGEGAFGKV) and Lys572. Residue Asp679 is the Proton acceptor of the active site. 4 positions are modified to phosphotyrosine; by autocatalysis: Tyr705, Tyr709, Tyr710, and Tyr859.

This sequence belongs to the protein kinase superfamily. Tyr protein kinase family. Insulin receptor subfamily. As to quaternary structure, exists in a dynamic equilibrium between monomeric (low affinity) and dimeric (high affinity) structures. Binds SH2B2. Interacts with SQSTM1 and KIDINS220. Interacts with PTPRS. Interacts with MAPK8IP3/JIP3. In terms of processing, ligand-mediated auto-phosphorylation. Widely expressed, mainly in the nervous tissue.

The protein resides in the membrane. It catalyses the reaction L-tyrosyl-[protein] + ATP = O-phospho-L-tyrosyl-[protein] + ADP + H(+). Its function is as follows. Receptor tyrosine kinase involved in nervous system and probably heart development. Upon binding of its ligand NTF3/neurotrophin-3, NTRK3 autophosphorylates and activates different signaling pathways, including the phosphatidylinositol 3-kinase/AKT and the MAPK pathways, that control cell survival and differentiation. NTRK3 isoforms containing insertions within the kinase domain can autophosphorylate in response to NTF3/neurotrophin-3, but cannot mediate downstream phenotypic responses. This Rattus norvegicus (Rat) protein is NT-3 growth factor receptor (Ntrk3).